Here is a 96-residue protein sequence, read N- to C-terminus: uncharacterized protein (96 aa).

Helical transmembrane passes span 27–47 (LYTV…FFFF) and 52–72 (MSAG…RPTI).

It localises to the cell membrane. This is an uncharacterized protein from Bacillus subtilis (strain 168).